Here is a 278-residue protein sequence, read N- to C-terminus: Asnovolin E/Chermesin D methyltransferase nvfJ (278 aa).

Residues 125 to 126 (DL), 152 to 153 (NI), and 153 to 154 (IL) contribute to the S-adenosyl-L-methionine site.

Belongs to the class I-like SAM-binding methyltransferase superfamily. As to quaternary structure, homodimer.

The enzyme catalyses chermesin D + S-adenosyl-L-methionine = chermesin D methyl ester + S-adenosyl-L-homocysteine. It catalyses the reaction asnovolin I + S-adenosyl-L-methionine = asnovolin K + S-adenosyl-L-homocysteine. It functions in the pathway secondary metabolite biosynthesis; terpenoid biosynthesis. Methyltransferase; part of the gene cluster that mediates the biosynthesis of novofumigatonin, a heavily oxygenated meroterpenoid containing a unique orthoester moiety. The first step of the pathway is the synthesis of 3,5-dimethylorsellinic acid (DMOA) by the polyketide synthase nvfA via condensation of one acetyl-CoA starter unit with 3 malonyl-CoA units and 2 methylations. DMOA is then converted to farnesyl-DMOA by the farnesyltransferase nvfB. Epoxydation by FAD-dependent monooxygenase nvfK, followed by a protonation-initiated cyclization catalyzed by the terpene cyclase nvfL leads to the production of asnavolin H. The short chain dehydrogenase nvfC then as a 3-OH dehydrogenase of asnovolin H to yield chemesin D. There are two branches to synthesize asnovolin A from chemesin D. In one branch, chemesin D undergoes Baeyer-Villiger oxidation by nvfH, methylation by nvfJ, and enoyl reduction by the nvfM D enoylreductase that reduces the double bond between C-5'and C-6', to form respectively asnovolin I, asnovolin K, and asnovolin A. In the other branch, the methylation precedes the Baeyer-Villiger oxidation and the enoyl reduction to yield asnovolin A via the asnovolin J intermediate. Asnovolin A is further converted to fumigatonoid A by the Fe(II)/2-oxoglutarate-dependent dioxygenase nvfI that catalyzes an endoperoxidation reaction. The alpha/beta hydrolase nvfD then acts as an epimerase that converts fumigatonoid A to its C-5' epimer, which then undergoes spontaneous or nvfD-catalyzed lactonization. The following step utilizes the ketoreductase nvfG to produce fumigatonoid B. The dioxygenase nvfE further converts fumigatonoid B into fumigatonoid C. Finally the Fe(II)/2-oxoglutarate-dependent dioxygenase nvfF catalyzes two rounds of oxidation to transform fumigatonoid C into the end product, novofumigatonin A. The chain is Asnovolin E/Chermesin D methyltransferase nvfJ from Aspergillus novofumigatus (strain IBT 16806).